A 573-amino-acid chain; its full sequence is Cytochrome P450 monooxygenase GME11363 (573 aa).

A helical transmembrane segment spans residues 10-30; sequence IGVVAAVLLAALILLYRAALP. Cys-519 contributes to the heme binding site.

This sequence belongs to the cytochrome P450 family. It depends on heme as a cofactor.

Its subcellular location is the membrane. It participates in secondary metabolite biosynthesis. Its function is as follows. Cytochrome P450 monooxygenase; part of the gene cluster that mediates the biosynthesis of dibenzodioxocinones such as pestalotiollide B, a novel class of inhibitors against cholesterol ester transfer protein (CEPT). The biosynthesis initiates from condensation of acetate and malonate units catalyzed by the non-reducing PKS pks8/GME11356. Pks8/GME11356 lacks a thioesterase (TE) domain, which is important to the cyclizing of the third ring of atrochrysone carboxylic acid, and the esterase GME11355 might play the role of TE and catalyzes the cyclization reaction of the C ring. The lactamase-like protein GME11357 (or other beta-lactamases in Pestalotiopsis microspora) probably hydrolyzes the thioester bond between the ACP of pks8/GME11356 and the intermediate to release atrochrysone carboxylic acid, which is spontaneously dehydrates to form endocrocin anthrone. Endocrocin anthrone is further converted to emodin via the endocrocin intermediate. Emodin is then oxidized by several enzymes such as the Baeyer-Villiger oxidase GME11358, the oxidoreductase GME11367, the short chain dehydrogenase/reductase GME11373, as well as by other oxidoreductases from the cluster, to modify the A and C rings and open the B ring, and finally yield monodictyphenone. The prenyltransferase GME11375 may catalyze the addition reaction between the C5 side chains and the carbon bone of dibenzodioxocinones. The remaining biochemical reactions to the final product dibenzodioxocinones should be methylation catalyzed by methyltransferase GME11366 and reduction and lactonization reaction catalyzed by a series of oxidordeuctases. The protein is Cytochrome P450 monooxygenase GME11363 of Pestalotiopsis microspora.